The following is a 195-amino-acid chain: Endoribonuclease YbeY (195 aa).

Zn(2+) is bound by residues histidine 153, histidine 157, and histidine 163.

It belongs to the endoribonuclease YbeY family. Requires Zn(2+) as cofactor.

The protein localises to the cytoplasm. In terms of biological role, single strand-specific metallo-endoribonuclease involved in late-stage 70S ribosome quality control and in maturation of the 3' terminus of the 16S rRNA. This is Endoribonuclease YbeY from Prochlorococcus marinus (strain SARG / CCMP1375 / SS120).